The primary structure comprises 469 residues: Probable ribonuclease FAU-1 (469 aa).

This sequence belongs to the FAU-1 family.

In terms of biological role, probable RNase involved in rRNA stability through maturation and/or degradation of precursor rRNAs. Binds to RNA in loop regions with AU-rich sequences. The protein is Probable ribonuclease FAU-1 of Ignicoccus hospitalis (strain KIN4/I / DSM 18386 / JCM 14125).